The sequence spans 353 residues: Guanine nucleotide-binding protein subunit beta-5 (353 aa).

7 WD repeats span residues G61–A100, M103–M142, M151–H192, H194–E236, T237–I276, S278–I320, and G323–W352.

The protein belongs to the WD repeat G protein beta family. In terms of assembly, component of a complex composed of RGS9 (isoform RGS9-1), GNB5 and RGS9BP; within this complex, the presence of GNB5 stabilizes both itself and RGS9 and increases RGS9 GTPase-activating protein (GAP) activity. Interacts with RGS7, forming the RGS7-GNB5 complex; within this complex, the presence of GNB5 increases RGS7 GTPase-activating protein (GAP) activity. Interacts with GPR158; promotes the GTPase activator activity of the RGS7-GNB5 complex in absence of glycine, in contrast GTPase activator activity of the RGS7-GNB5 complex is inhibited in presence of glycine. Interacts with RGS6.

The protein resides in the membrane. Enhances GTPase-activating protein (GAP) activity of regulator of G protein signaling (RGS) proteins, such as RGS7 and RGS9, hence involved in the termination of the signaling initiated by the G protein coupled receptors (GPCRs) by accelerating the GTP hydrolysis on the G-alpha subunits, thereby promoting their inactivation. Increases RGS7 GTPase-activating protein (GAP) activity, thereby regulating mood and cognition. Increases RGS9 GTPase-activating protein (GAP) activity, hence contributes to the deactivation of G protein signaling initiated by D(2) dopamine receptors. May play an important role in neuronal signaling, including in the parasympathetic, but not sympathetic, control of heart rate. This chain is Guanine nucleotide-binding protein subunit beta-5 (GNB5), found in Oryctolagus cuniculus (Rabbit).